The primary structure comprises 46 residues: Iota-conotoxin-like M11.1 (46 aa).

Cystine bridges form between Cys5–Cys19, Cys12–Cys22, Cys18–Cys27, and Cys21–Cys38. Met44 is modified (D-methionine). A propeptide (removed by a carboxypeptidase) is located at residue Arg46.

This sequence belongs to the conotoxin I1 superfamily. In terms of tissue distribution, expressed by the venom duct.

Its subcellular location is the secreted. Its function is as follows. Iota-conotoxins bind to voltage-gated sodium channels (Nav) and act as agonists by shifting the voltage-dependence of activation to more hyperpolarized levels. Produces general excitatory symptoms. In Conus magus (Magical cone), this protein is Iota-conotoxin-like M11.1.